The following is a 314-amino-acid chain: tRNA pseudouridine synthase B (314 aa).

Catalysis depends on aspartate 54, which acts as the Nucleophile.

The protein belongs to the pseudouridine synthase TruB family. Type 1 subfamily.

The enzyme catalyses uridine(55) in tRNA = pseudouridine(55) in tRNA. Functionally, responsible for synthesis of pseudouridine from uracil-55 in the psi GC loop of transfer RNAs. This is tRNA pseudouridine synthase B from Cupriavidus metallidurans (strain ATCC 43123 / DSM 2839 / NBRC 102507 / CH34) (Ralstonia metallidurans).